A 128-amino-acid polypeptide reads, in one-letter code: Large ribosomal subunit protein bL12 (128 aa).

The protein belongs to the bacterial ribosomal protein bL12 family. In terms of assembly, homodimer. Part of the ribosomal stalk of the 50S ribosomal subunit. Forms a multimeric L10(L12)X complex, where L10 forms an elongated spine to which 2 to 4 L12 dimers bind in a sequential fashion. Binds GTP-bound translation factors.

Functionally, forms part of the ribosomal stalk which helps the ribosome interact with GTP-bound translation factors. Is thus essential for accurate translation. In Picosynechococcus sp. (strain ATCC 27264 / PCC 7002 / PR-6) (Agmenellum quadruplicatum), this protein is Large ribosomal subunit protein bL12.